Consider the following 1733-residue polypeptide: Desertorin synthase (1733 aa).

An N-terminal acylcarrier protein transacylase domain (SAT) region spans residues 21–358 (RIRQQSRSSR…HAPTRDLTEW (338 aa)). Positions 372-799 (DCRIAVVGMS…GGNTALLLEE (428 aa)) constitute a Ketosynthase family 3 (KS3) domain. Residues 406–422 (HVPPDRYDVQSHTDPTG) are compositionally biased toward basic and acidic residues. Positions 406 to 429 (HVPPDRYDVQSHTDPTGRRMNTSQ) are disordered. Catalysis depends on for beta-ketoacyl synthase activity residues cysteine 544, histidine 679, and histidine 718. The segment at 903–1211 (FVFSGQGSFY…DNWHTLAGSM (309 aa)) is malonyl-CoA:ACP transacylase (MAT) domain. Residues 1288 to 1420 (HRIVEETFWA…GTVSVGNAAS (133 aa)) form an N-terminal hotdog fold region. Residues 1288 to 1598 (HRIVEETFWA…LRPLPRILMH (311 aa)) form the PKS/mFAS DH domain. Residues 1299-1594 (GGRVVMESNV…AGVTLRPLPR (296 aa)) are product template (PT) domain. Histidine 1320 functions as the Proton acceptor; for dehydratase activity in the catalytic mechanism. The tract at residues 1448–1598 (ADRLTRDTVY…LRPLPRILMH (151 aa)) is C-terminal hotdog fold. Aspartate 1506 (proton donor; for dehydratase activity) is an active-site residue. Positions 1608 to 1659 (HNWGNSPAKPEAKPEMVPTSGSSSAAGSPSGSSAGPLSIPERLADPSETSFQ) are disordered. Over residues 1627-1643 (SGSSSAAGSPSGSSAGP) the composition is skewed to low complexity. Positions 1659-1733 (QSKASKVSKA…TVGEVKRQML (75 aa)) constitute a Carrier domain. At serine 1696 the chain carries O-(pantetheine 4'-phosphoryl)serine.

Requires pantetheine 4'-phosphate as cofactor.

Its pathway is secondary metabolite biosynthesis. Its function is as follows. Non-reducing polyketide synthase; part of the gene cluster that mediates the biosynthesis of the bicoumarin desertorin. The non-reducing polyketide synthase desS first catalyzes the formation of the pentaketidic 4,7-dihydroxy-5-methylcoumarin from acetyl coenzyme A and 4 malonyl coenzyme A molecules. Further O-methylation by desB leads to the formation of 7-demethylsiderin. Then, an oxidative phenol coupling catalyzed by the cytochrome P450 monooxygenase desC forms the 6,8'-dimer M-desertorin A via dimerization the monomeric precursor, 7-demethylsiderin. M-desertorin A is further converted to M-desertorin C. The protein is Desertorin synthase of Aspergillus desertorum (Emericella desertorum).